The chain runs to 122 residues: Large ribosomal subunit protein bL12 (122 aa).

This sequence belongs to the bacterial ribosomal protein bL12 family. As to quaternary structure, homodimer. Part of the ribosomal stalk of the 50S ribosomal subunit. Forms a multimeric L10(L12)X complex, where L10 forms an elongated spine to which 2 to 4 L12 dimers bind in a sequential fashion. Binds GTP-bound translation factors.

Forms part of the ribosomal stalk which helps the ribosome interact with GTP-bound translation factors. Is thus essential for accurate translation. In Stutzerimonas stutzeri (strain A1501) (Pseudomonas stutzeri), this protein is Large ribosomal subunit protein bL12.